We begin with the raw amino-acid sequence, 178 residues long: ATP-dependent protease subunit HslV (178 aa).

The active site involves threonine 7. Positions 162, 165, and 168 each coordinate Na(+).

The protein belongs to the peptidase T1B family. HslV subfamily. As to quaternary structure, a double ring-shaped homohexamer of HslV is capped on each side by a ring-shaped HslU homohexamer. The assembly of the HslU/HslV complex is dependent on binding of ATP.

Its subcellular location is the cytoplasm. It catalyses the reaction ATP-dependent cleavage of peptide bonds with broad specificity.. Allosterically activated by HslU binding. Protease subunit of a proteasome-like degradation complex believed to be a general protein degrading machinery. The chain is ATP-dependent protease subunit HslV from Cupriavidus necator (strain ATCC 17699 / DSM 428 / KCTC 22496 / NCIMB 10442 / H16 / Stanier 337) (Ralstonia eutropha).